We begin with the raw amino-acid sequence, 261 residues long: tRNA pseudouridine synthase A (261 aa).

The active-site Nucleophile is the Asp55. Tyr114 serves as a coordination point for substrate.

Belongs to the tRNA pseudouridine synthase TruA family. Homodimer.

The catalysed reaction is uridine(38/39/40) in tRNA = pseudouridine(38/39/40) in tRNA. Its function is as follows. Formation of pseudouridine at positions 38, 39 and 40 in the anticodon stem and loop of transfer RNAs. The sequence is that of tRNA pseudouridine synthase A from Paracoccus denitrificans (strain Pd 1222).